The sequence spans 623 residues: Transketolase (623 aa).

M1 carries the post-translational modification N-acetylmethionine. N6-acetyllysine is present on residues K6 and K11. H37 is a binding site for substrate. 2 residues coordinate thiamine diphosphate: S40 and H77. Position 104 is a phosphoserine (S104). 123-125 provides a ligand contact to thiamine diphosphate; the sequence is GSL. K144 is modified (N6-acetyllysine). Mg(2+) is bound at residue D155. Residues G156 and N185 each coordinate thiamine diphosphate. Mg(2+) contacts are provided by N185 and L187. An N6-acetyllysine mark is found at K204, K232, and K241. Positions 244 and 258 each coordinate thiamine diphosphate. Substrate is bound at residue H258. K260 carries the post-translational modification N6-acetyllysine. A Phosphotyrosine modification is found at Y275. At T287 the chain carries Phosphothreonine. A Phosphoserine modification is found at S295. Substrate is bound by residues R318 and S345. At S345 the chain carries Phosphoserine. A Glycyl lysine isopeptide (Lys-Gly) (interchain with G-Cter in SUMO2) cross-link involves residue K352. The Proton donor role is filled by E366. F392 lines the thiamine diphosphate pocket. Substrate-binding residues include H416 and D424. Residue Q428 participates in thiamine diphosphate binding. R474 lines the substrate pocket. N6-acetyllysine is present on residues K538 and K603.

Belongs to the transketolase family. As to quaternary structure, homodimer. Mg(2+) serves as cofactor. Requires Ca(2+) as cofactor. It depends on Mn(2+) as a cofactor. Co(2+) is required as a cofactor. The cofactor is thiamine diphosphate.

The enzyme catalyses D-sedoheptulose 7-phosphate + D-glyceraldehyde 3-phosphate = aldehydo-D-ribose 5-phosphate + D-xylulose 5-phosphate. Functionally, catalyzes the transfer of a two-carbon ketol group from a ketose donor to an aldose acceptor, via a covalent intermediate with the cofactor thiamine pyrophosphate. The chain is Transketolase (Tkt) from Rattus norvegicus (Rat).